The sequence spans 442 residues: Trigger factor (442 aa).

The PPIase FKBP-type domain maps to 175-258 (GDFISISLHV…VNAVIEVSIP (84 aa)).

This sequence belongs to the FKBP-type PPIase family. Tig subfamily.

Its subcellular location is the cytoplasm. The enzyme catalyses [protein]-peptidylproline (omega=180) = [protein]-peptidylproline (omega=0). In terms of biological role, involved in protein export. Acts as a chaperone by maintaining the newly synthesized protein in an open conformation. Functions as a peptidyl-prolyl cis-trans isomerase. The polypeptide is Trigger factor (tig) (Chlamydia pneumoniae (Chlamydophila pneumoniae)).